Consider the following 303-residue polypeptide: Flavin-dependent thymidylate synthase (303 aa).

The tract at residues 1 to 21 is disordered; that stretch reads MALTSEQRAEIEAQRSEPQLT. One can recognise a ThyX domain in the interval 43-256; that stretch reads GFLRVVDYMG…PATAAAFEEY (214 aa). FAD contacts are provided by residues Thr-89, 112–114, and Glu-120; that span reads RHR. Residues 109–112, 120–124, and Arg-195 each bind dUMP; these read QWIR and EYSAR. The ThyX motif motif lies at 112–122; that stretch reads RHRMASVNEYS. Residues 211–213 and His-217 each bind FAD; that span reads DLH. Residue Arg-222 participates in dUMP binding. Catalysis depends on Arg-222, which acts as the Involved in ionization of N3 of dUMP, leading to its activation.

The protein belongs to the thymidylate synthase ThyX family. As to quaternary structure, homotetramer. The cofactor is FAD.

It carries out the reaction dUMP + (6R)-5,10-methylene-5,6,7,8-tetrahydrofolate + NADPH + H(+) = dTMP + (6S)-5,6,7,8-tetrahydrofolate + NADP(+). Its pathway is pyrimidine metabolism; dTTP biosynthesis. Its function is as follows. Catalyzes the reductive methylation of 2'-deoxyuridine-5'-monophosphate (dUMP) to 2'-deoxythymidine-5'-monophosphate (dTMP) while utilizing 5,10-methylenetetrahydrofolate (mTHF) as the methyl donor, and NADPH and FADH(2) as the reductant. This is Flavin-dependent thymidylate synthase from Gluconobacter oxydans (strain 621H) (Gluconobacter suboxydans).